Here is a 238-residue protein sequence, read N- to C-terminus: Ribonuclease PH (238 aa).

Residues R86 and 124-126 (GTR) contribute to the phosphate site.

This sequence belongs to the RNase PH family. In terms of assembly, homohexameric ring arranged as a trimer of dimers.

It carries out the reaction tRNA(n+1) + phosphate = tRNA(n) + a ribonucleoside 5'-diphosphate. Phosphorolytic 3'-5' exoribonuclease that plays an important role in tRNA 3'-end maturation. Removes nucleotide residues following the 3'-CCA terminus of tRNAs; can also add nucleotides to the ends of RNA molecules by using nucleoside diphosphates as substrates, but this may not be physiologically important. Probably plays a role in initiation of 16S rRNA degradation (leading to ribosome degradation) during starvation. The sequence is that of Ribonuclease PH from Shigella dysenteriae serotype 1 (strain Sd197).